The primary structure comprises 518 residues: Probable cytochrome P450 9h1 (518 aa).

Residue Cys-462 coordinates heme.

It belongs to the cytochrome P450 family. Heme is required as a cofactor.

The protein resides in the endoplasmic reticulum membrane. It is found in the microsome membrane. In terms of biological role, may be involved in the metabolism of insect hormones and in the breakdown of synthetic insecticides. In Drosophila melanogaster (Fruit fly), this protein is Probable cytochrome P450 9h1 (Cyp9h1).